We begin with the raw amino-acid sequence, 418 residues long: Histidine--tRNA ligase (418 aa).

The protein belongs to the class-II aminoacyl-tRNA synthetase family. Homodimer.

The protein localises to the cytoplasm. The enzyme catalyses tRNA(His) + L-histidine + ATP = L-histidyl-tRNA(His) + AMP + diphosphate + H(+). In Thermoanaerobacter pseudethanolicus (strain ATCC 33223 / 39E) (Clostridium thermohydrosulfuricum), this protein is Histidine--tRNA ligase.